Here is a 320-residue protein sequence, read N- to C-terminus: Cytochrome f (320 aa).

The N-terminal stretch at Met1–Ala35 is a signal peptide. The heme site is built by Tyr36, Cys56, Cys59, and His60. Residues Val286–Lys306 form a helical membrane-spanning segment.

The protein belongs to the cytochrome f family. The 4 large subunits of the cytochrome b6-f complex are cytochrome b6, subunit IV (17 kDa polypeptide, petD), cytochrome f and the Rieske protein, while the 4 small subunits are PetG, PetL, PetM and PetN. The complex functions as a dimer. Heme is required as a cofactor.

The protein localises to the plastid. The protein resides in the chloroplast thylakoid membrane. Functionally, component of the cytochrome b6-f complex, which mediates electron transfer between photosystem II (PSII) and photosystem I (PSI), cyclic electron flow around PSI, and state transitions. The sequence is that of Cytochrome f from Phalaenopsis aphrodite subsp. formosana (Moth orchid).